A 590-amino-acid chain; its full sequence is Putative sodium/calcium exchanger 6 (590 aa).

The first 19 residues, Met1–Gly19, serve as a signal peptide directing secretion. 11 helical membrane passes run Ile97–Ala117, Val139–Ala159, Leu173–Phe193, Ile208–Val228, Ile230–Ser250, Pro368–Cys388, Pro397–Phe417, Ile440–Val460, Ala499–Ile519, Tyr535–Ala555, and Leu568–Val588.

Belongs to the Ca(2+):cation antiporter (CaCA) (TC 2.A.19) family.

It is found in the membrane. The polypeptide is Putative sodium/calcium exchanger 6 (ncx-6) (Caenorhabditis elegans).